The following is a 950-amino-acid chain: MDKYALLQRAKLHLDFIHANSTTHSFLFGALAELLDNARDAGAVRLDVFSVDNETLQGGFMLCFLDDGCGMSPDEASDVIYFGTSKKRLSTLKFIGQYGNGLKSGSMRIGKDCILFTKKEETMTCLFFSQTFCEKEGLTEVVVPIPSWLTRTRESITDDPQKFFTELSIIFKYSPFKTEAELMQQFDMIYGRCGTLLIIYNLKLLLSGEPELDVTTDKEDILMAEAPEEIPERRSFRAYTAVLYFEPRMKIFIQAKRVQTKHLCYSLYKPRKYQYTTSSFKGKFKTEVQKAEEAVKRAELLFKEVQAKVNQPDRIALSSTQDALQKALQDVDTKHKSLRQKQRALRKARTLSLFFGVNTEDQHQAGMFIYSNNRLIKMYEKVGPQLKMKSLLGAGIIGIVNIPLETMEPSHNKQEFLNVQEYNHLLKVMGQYLIQYCKDIGISNRNLTLFWDEFKYQHSKDTDSSLESLQWRRRQAMGIPFILQCDLCLKWRVLPSSSNYQEKGLPDLWICASNPNNLENSCNQIERLPSIPLGTVNRRPPSKDERERQLQESVQRYQDKLVEAQPQKSQLIVTSKIPEFKSSCLSSALKEKSKLGRIQPSGADLTQGSPSSVKLSFMQRSQKRSTEDTHSDVEFICMTKIPKKSVKKTVKYLQPGHAPALLENLKLEDTAQVSSREIKKQQSESLVQAGKASTDVASSRDPTVTMVWDQSSTKVSLKQEEEEEVPLIKPDKQELCDDTPVVKGNSSALHWKSLPGVQMEDLSPRSGHKINSVSGDCQLPASPMPSQSMSVEETARKLLSNLREILLYFVPEFQLSSEFECTSVEELITNPELERCPENINEKLKTCFNQIQNIYMAQYEKRLKRKMQSIVYEANRRGLLNQVFLGQCELKRKRTEEKLSDLRAKLALLLQKLQLGGPAGDPQQIDAYLEDLLKEDRLPTALHEKSPESA.

The stretch at 281–342 forms a coiled coil; the sequence is KGKFKTEVQK…TKHKSLRQKQ (62 aa). The segment at 465 to 530 adopts a CW-type zinc-finger fold; sequence SLESLQWRRR…SCNQIERLPS (66 aa). Zn(2+) contacts are provided by Cys485, Cys488, Cys511, and Cys522. Disordered regions lie at residues 532 to 551 and 679 to 700; these read PLGT…RQLQ and KKQQ…ASSR. Positions 541–550 are enriched in basic and acidic residues; it reads PSKDERERQL. Residues 885-916 adopt a coiled-coil conformation; it reads LGQCELKRKRTEEKLSDLRAKLALLLQKLQLG.

Expressed at very low level in male germ cells.

Its subcellular location is the nucleus. Its function is as follows. Required for spermatogenesis. Essential for de novo DNA methylation and silencing of transposable elements in the male embryonic germ cells. Not required for piRNA biosynthesis. This chain is MORC family CW-type zinc finger protein 1, found in Mus musculus (Mouse).